Consider the following 231-residue polypeptide: 5'-methylthioadenosine/S-adenosylhomocysteine nucleosidase (231 aa).

Glu-12 acts as the Proton acceptor in catalysis. Substrate is bound by residues Gly-78, Val-153, and 174 to 175 (ME). Asp-198 acts as the Proton donor in catalysis.

This sequence belongs to the PNP/UDP phosphorylase family. MtnN subfamily.

It carries out the reaction S-adenosyl-L-homocysteine + H2O = S-(5-deoxy-D-ribos-5-yl)-L-homocysteine + adenine. It catalyses the reaction S-methyl-5'-thioadenosine + H2O = 5-(methylsulfanyl)-D-ribose + adenine. The enzyme catalyses 5'-deoxyadenosine + H2O = 5-deoxy-D-ribose + adenine. The protein operates within amino-acid biosynthesis; L-methionine biosynthesis via salvage pathway; S-methyl-5-thio-alpha-D-ribose 1-phosphate from S-methyl-5'-thioadenosine (hydrolase route): step 1/2. In terms of biological role, catalyzes the irreversible cleavage of the glycosidic bond in both 5'-methylthioadenosine (MTA) and S-adenosylhomocysteine (SAH/AdoHcy) to adenine and the corresponding thioribose, 5'-methylthioribose and S-ribosylhomocysteine, respectively. Also cleaves 5'-deoxyadenosine, a toxic by-product of radical S-adenosylmethionine (SAM) enzymes, into 5-deoxyribose and adenine. The sequence is that of 5'-methylthioadenosine/S-adenosylhomocysteine nucleosidase from Vibrio atlanticus (strain LGP32) (Vibrio splendidus (strain Mel32)).